The sequence spans 527 residues: Coiled-coil domain-containing protein 148 (527 aa).

Coiled coils occupy residues 289 to 353 (LAKD…TEIK) and 401 to 438 (LEKRLMERKKLALQEVQEEEERERRLEALRKQVAVAVQ).

In Mus musculus (Mouse), this protein is Coiled-coil domain-containing protein 148 (Ccdc148).